The chain runs to 237 residues: MATKRKCPANGDDGGVADLEPVAGGSFASPPPEKKAKLTVAVAVAVAPSSSSSATTAAAGEATAKREHGGFFAFARPENNTRLSVAVASSSSSASAAAEKAMAKLTVAGVAPSSSASAAAAGKATAKREYGGFCAFARPDDKTRWRVAVASSAAAAADASYSSSSPATGEQPEANRCATCRRKVGLTGFKCRCGGTFCGGHRYADEHGCGFDYKSSGRELIAKQNPVVVADKLAFRI.

The tract at residues 1–31 (MATKRKCPANGDDGGVADLEPVAGGSFASPP) is disordered. The AN1-type zinc finger occupies 171-217 (QPEANRCATCRRKVGLTGFKCRCGGTFCGGHRYADEHGCGFDYKSSG). Positions 177, 180, 191, 193, 198, 201, 207, and 209 each coordinate Zn(2+).

Its function is as follows. May be involved in environmental stress response. This Oryza sativa subsp. japonica (Rice) protein is Zinc finger AN1 domain-containing stress-associated protein 14 (SAP14).